Reading from the N-terminus, the 158-residue chain is UPF0735 ACT domain-containing protein Bsph_3944 (158 aa).

The 76-residue stretch at 80-155 (TVFLQLQDRK…FVESAEVISS (76 aa)) folds into the ACT domain.

This sequence belongs to the UPF0735 family.

The chain is UPF0735 ACT domain-containing protein Bsph_3944 from Lysinibacillus sphaericus (strain C3-41).